The primary structure comprises 566 residues: 3'-5' exoribonuclease parn-1 (566 aa).

A divalent metal cation contacts are provided by Asp29, Glu31, Asp283, and Asp379.

It belongs to the CAF1 family. A divalent metal cation serves as cofactor. Expressed in germline cells.

It localises to the cytoplasm. Involved in transcriptome surveillance. Required for piwi-interacting RNAs (piRNAs) 3'-end trimming, which is important for both fertility and piRNA-directed gene silencing. Has 3' to 5' exonuclease activity in vitro. The sequence is that of 3'-5' exoribonuclease parn-1 from Caenorhabditis elegans.